The primary structure comprises 650 residues: ATP-dependent zinc metalloprotease FtsH (650 aa).

The Cytoplasmic portion of the chain corresponds to 1–10; the sequence is MKTKKSKSTL. A helical membrane pass occupies residues 11–31; it reads WFWLIILLAIIVTIIIIAVTV. Residues 32–123 are Extracellular-facing; sequence KGTTQVISDA…LVYQGSVGMA (92 aa). The chain crosses the membrane as a helical span at residues 124–144; that stretch reads LLVSLAPLLIYVLLFGGIIWF. Over 145–650 the chain is Cytoplasmic; that stretch reads MMKSSSGAGA…DIKVEDLDID (506 aa). 217–224 is a binding site for ATP; that stretch reads GPPGTGKT. Histidine 437 lines the Zn(2+) pocket. Glutamate 438 is a catalytic residue. Histidine 441 and aspartate 515 together coordinate Zn(2+).

It in the central section; belongs to the AAA ATPase family. The protein in the C-terminal section; belongs to the peptidase M41 family. In terms of assembly, homohexamer. The cofactor is Zn(2+).

The protein localises to the cell membrane. In terms of biological role, acts as a processive, ATP-dependent zinc metallopeptidase for both cytoplasmic and membrane proteins. Plays a role in the quality control of integral membrane proteins. This chain is ATP-dependent zinc metalloprotease FtsH, found in Mesoplasma florum (strain ATCC 33453 / NBRC 100688 / NCTC 11704 / L1) (Acholeplasma florum).